Here is a 352-residue protein sequence, read N- to C-terminus: Zona pellucida-binding protein 2 (352 aa).

An N-terminal signal peptide occupies residues 1-28; it reads MAGGGGRPCSPQRALLGMVAIMAVVAEA. 2 N-linked (GlcNAc...) asparagine glycosylation sites follow: Asn110 and Asn309.

The protein belongs to the zona pellucida-binding protein Sp38 family.

The protein localises to the secreted. It is found in the cytoplasmic vesicle. The protein resides in the secretory vesicle. It localises to the acrosome. Its function is as follows. May be implicated in the gamete interaction during fertilization. The protein is Zona pellucida-binding protein 2 (ZPBP2) of Gallus gallus (Chicken).